A 394-amino-acid chain; its full sequence is G2/mitotic-specific cyclin-B (394 aa).

A disordered region spans residues 360–394; it reads QSHPSPNSRLDQEEDMASSKFMSDQQATQELKSIR. Positions 379 to 394 are enriched in polar residues; sequence KFMSDQQATQELKSIR.

This sequence belongs to the cyclin family. Cyclin AB subfamily. As to quaternary structure, interacts with the CDK1 protein kinase to form a serine/threonine kinase holoenzyme complex also known as maturation promoting factor (MPF). The cyclin subunit imparts substrate specificity to the complex.

Functionally, essential for the control of the cell cycle at the G2/M (mitosis) transition. The polypeptide is G2/mitotic-specific cyclin-B (Patiria pectinifera (Starfish)).